The sequence spans 284 residues: Bifunctional protein FolD (284 aa).

Residues 166–168 (GAS) and I232 contribute to the NADP(+) site.

The protein belongs to the tetrahydrofolate dehydrogenase/cyclohydrolase family. In terms of assembly, homodimer.

The enzyme catalyses (6R)-5,10-methylene-5,6,7,8-tetrahydrofolate + NADP(+) = (6R)-5,10-methenyltetrahydrofolate + NADPH. The catalysed reaction is (6R)-5,10-methenyltetrahydrofolate + H2O = (6R)-10-formyltetrahydrofolate + H(+). It functions in the pathway one-carbon metabolism; tetrahydrofolate interconversion. Catalyzes the oxidation of 5,10-methylenetetrahydrofolate to 5,10-methenyltetrahydrofolate and then the hydrolysis of 5,10-methenyltetrahydrofolate to 10-formyltetrahydrofolate. This is Bifunctional protein FolD from Pseudomonas aeruginosa (strain LESB58).